The primary structure comprises 251 residues: MEMKQISETTLKITISMEDLEDRGMELKDFLIPQEKTEEFFYSVMDELDLPENFKNSGMLSFRVTPKKDRIDVFVTKSELSKDLNLEELADLGDISKMSPEDFFKTLEQSMLEKGDTDAHAKLAEIENMMDKATQEVVEENVSEEQAEKEVETIGYVHYVFDFDNIEAVVRFSQTIDFPIEASELYKNGKGYHMTILLDLENQPSYFANLMYARMLEHANVGTKTRAYLKEHSIQLIHDDAISKLQMIEMG.

This sequence belongs to the MecA family. In terms of assembly, homodimer.

In terms of biological role, enables the recognition and targeting of unfolded and aggregated proteins to the ClpC protease or to other proteins involved in proteolysis. This is Adapter protein MecA from Streptococcus agalactiae serotype Ia (strain ATCC 27591 / A909 / CDC SS700).